The following is a 111-amino-acid chain: 2Fe-2S ferredoxin (111 aa).

A 2Fe-2S ferredoxin-type domain is found at 1-104; the sequence is MPKIFFLPHK…DIEVQIPLYN (104 aa). Cys-42, Cys-48, Cys-51, and Cys-87 together coordinate [2Fe-2S] cluster.

It belongs to the adrenodoxin/putidaredoxin family. [2Fe-2S] cluster serves as cofactor.

Its function is as follows. Ferredoxin are iron-sulfur proteins that transfer electrons in a wide variety of metabolic reactions. The polypeptide is 2Fe-2S ferredoxin (fdx) (Buchnera aphidicola subsp. Schizaphis graminum (strain Sg)).